A 301-amino-acid polypeptide reads, in one-letter code: MPT51 antigen (301 aa).

The signal sequence occupies residues 1 to 36 (MRGLSAVVRVLCVAALAVGVFAAAVLLAGTAGNAKA).

The protein belongs to the mycobacterial A85 antigen family. As to quaternary structure, homodimer.

It is found in the secreted. May have a role in host tissue attachment, whereby ligands may include the serum protein fibronectin and small sugars. This is MPT51 antigen (mpt51) from Mycobacterium leprae (strain TN).